Reading from the N-terminus, the 290-residue chain is Ribosomal RNA small subunit methyltransferase A (290 aa).

Residues N27, L29, G54, E75, D100, and N125 each contribute to the S-adenosyl-L-methionine site.

This sequence belongs to the class I-like SAM-binding methyltransferase superfamily. rRNA adenine N(6)-methyltransferase family. RsmA subfamily.

It localises to the cytoplasm. It catalyses the reaction adenosine(1518)/adenosine(1519) in 16S rRNA + 4 S-adenosyl-L-methionine = N(6)-dimethyladenosine(1518)/N(6)-dimethyladenosine(1519) in 16S rRNA + 4 S-adenosyl-L-homocysteine + 4 H(+). In terms of biological role, specifically dimethylates two adjacent adenosines (A1518 and A1519) in the loop of a conserved hairpin near the 3'-end of 16S rRNA in the 30S particle. May play a critical role in biogenesis of 30S subunits. The polypeptide is Ribosomal RNA small subunit methyltransferase A (Streptococcus sanguinis (strain SK36)).